A 443-amino-acid polypeptide reads, in one-letter code: Na(+)-translocating NADH-quinone reductase subunit A (443 aa).

The protein belongs to the NqrA family. As to quaternary structure, composed of six subunits; NqrA, NqrB, NqrC, NqrD, NqrE and NqrF.

The catalysed reaction is a ubiquinone + n Na(+)(in) + NADH + H(+) = a ubiquinol + n Na(+)(out) + NAD(+). NQR complex catalyzes the reduction of ubiquinone-1 to ubiquinol by two successive reactions, coupled with the transport of Na(+) ions from the cytoplasm to the periplasm. NqrA to NqrE are probably involved in the second step, the conversion of ubisemiquinone to ubiquinol. This chain is Na(+)-translocating NADH-quinone reductase subunit A, found in Actinobacillus succinogenes (strain ATCC 55618 / DSM 22257 / CCUG 43843 / 130Z).